Consider the following 218-residue polypeptide: Pyridoxine/pyridoxamine 5'-phosphate oxidase (218 aa).

Substrate contacts are provided by residues Arg12–Tyr15 and Arg70. Residues Arg65–Arg70, Tyr80–Thr81, Lys87, and Gln109 contribute to the FMN site. Substrate-binding residues include Tyr127, Arg131, and Ser135. FMN contacts are provided by residues Gln145 to Ser146 and Trp191. Arg197–His199 contacts substrate. Arg201 is a binding site for FMN.

The protein belongs to the pyridoxamine 5'-phosphate oxidase family. As to quaternary structure, homodimer. It depends on FMN as a cofactor.

It catalyses the reaction pyridoxamine 5'-phosphate + O2 + H2O = pyridoxal 5'-phosphate + H2O2 + NH4(+). It carries out the reaction pyridoxine 5'-phosphate + O2 = pyridoxal 5'-phosphate + H2O2. Its pathway is cofactor metabolism; pyridoxal 5'-phosphate salvage; pyridoxal 5'-phosphate from pyridoxamine 5'-phosphate: step 1/1. It functions in the pathway cofactor metabolism; pyridoxal 5'-phosphate salvage; pyridoxal 5'-phosphate from pyridoxine 5'-phosphate: step 1/1. Its function is as follows. Catalyzes the oxidation of either pyridoxine 5'-phosphate (PNP) or pyridoxamine 5'-phosphate (PMP) into pyridoxal 5'-phosphate (PLP). The polypeptide is Pyridoxine/pyridoxamine 5'-phosphate oxidase (Acinetobacter baumannii (strain AB0057)).